Consider the following 1159-residue polypeptide: Syntaxin-binding protein 5-like (1159 aa).

A disordered region spans residues Met-1 to Thr-37. Over residues Cys-25 to Thr-37 the composition is skewed to low complexity. 10 WD repeats span residues Thr-67 to Gln-108, Val-115 to Phe-154, Ile-159 to Ile-195, His-214 to Ile-248, Ile-254 to Pro-286, Pro-307 to Thr-350, Ile-358 to Leu-392, Thr-414 to Lys-491, Gln-519 to Val-628, and Thr-642 to Gly-703. 2 disordered regions span residues Ser-571–Asp-604 and Leu-690–Ser-770. Polar residues-rich tracts occupy residues Gln-699–Ser-713 and Ser-721–Cys-739. WD repeat units follow at residues Val-808–Val-865, Arg-874–Leu-946, Ile-951–Ser-995, and Cys-1009–Gln-1032. In terms of domain architecture, v-SNARE coiled-coil homology spans Gly-1094–Lys-1154.

The protein belongs to the WD repeat L(2)GL family.

Its subcellular location is the cytoplasm. The protein localises to the cell membrane. It localises to the membrane. May play a role in vesicle trafficking and exocytosis. This Danio rerio (Zebrafish) protein is Syntaxin-binding protein 5-like (stxbp5l).